The primary structure comprises 470 residues: Putative multidrug resistance protein MdtD (470 aa).

Topologically, residues 1-11 (MTELPDNTRWQ) are periplasmic. A helical membrane pass occupies residues 12 to 32 (LWIVAFGFFMQSLDTTIVNTA). Residues 33-48 (LPSMAKSLGESPLHMH) lie on the Cytoplasmic side of the membrane. The helical transmembrane segment at 49–69 (MVVVSYVLTVAVMLPASGWLA) threads the bilayer. The Periplasmic segment spans residues 70–76 (DKIGVRN). A helical transmembrane segment spans residues 77–97 (IFFAAIVLFTLGSLFCALSGT). Residues 98–101 (LNQL) are Cytoplasmic-facing. Residues 102-124 (VLARVLQGVGGAMMVPVGRLTVM) traverse the membrane as a helical segment. At 125–137 (KIVPRAQYMAAMT) the chain is on the periplasmic side. Residues 138–158 (FVTLPGQIGPLLGPALGGVLV) traverse the membrane as a helical segment. The Cytoplasmic portion of the chain corresponds to 159–164 (EYASWH). The helical transmembrane segment at 165-185 (WIFLINIPVGIVGAMATFMLM) threads the bilayer. Over 186-196 (PNYIIETRRFD) the chain is Periplasmic. The helical transmembrane segment at 197-217 (LPGFLLLAIGMAVLTLALDGS) threads the bilayer. Residues 218-224 (KSMGISP) lie on the Cytoplasmic side of the membrane. Residues 225–245 (WTLAGLAAGGAAAILLYLFHA) form a helical membrane-spanning segment. Residues 246-262 (KKNSGALFSLRLFRTPT) are Periplasmic-facing. A helical membrane pass occupies residues 263–283 (FSLGLLGSFAGRIGSGMLPFM). Topologically, residues 284-285 (TP) are cytoplasmic. A helical transmembrane segment spans residues 286 to 306 (VFLQIGLGFSPFHAGLMMIPM). The Periplasmic segment spans residues 307 to 341 (VLGSMGMKRIVVQIVNRFGYRRVLVATTLGLALVS). Residues 342–362 (LLFMSVALLGWYYLLPLVLLL) form a helical membrane-spanning segment. At 363–395 (QGMVNSARFSSMNTLTLKDLPDTLASSGNSLLS) the chain is on the cytoplasmic side. The chain crosses the membrane as a helical span at residues 396–416 (MIMQLSMSIGVTIAGMLLGMF). Residues 417-430 (GQQHIGIDSSATHH) lie on the Periplasmic side of the membrane. The chain crosses the membrane as a helical span at residues 431 to 451 (VFMYTWLCMAVIIALPAIIFA). The Cytoplasmic segment spans residues 452–470 (RVPNDTQQNMVISRRKRSL).

The protein belongs to the major facilitator superfamily. TCR/Tet family.

It is found in the cell inner membrane. The polypeptide is Putative multidrug resistance protein MdtD (Salmonella typhimurium (strain LT2 / SGSC1412 / ATCC 700720)).